Here is a 125-residue protein sequence, read N- to C-terminus: Neuraminyllactose-binding hemagglutinin (125 aa).

Positions 92–97 (KRTIQK) are N-acetyl-neuraminyl-alpha(2,3)-lactose binding motif.

The protein localises to the cell outer membrane. The polypeptide is Neuraminyllactose-binding hemagglutinin (hpaA) (Helicobacter pylori (Campylobacter pylori)).